A 190-amino-acid chain; its full sequence is Peptidyl-tRNA hydrolase (190 aa).

Tyr18 is a binding site for tRNA. His23 acts as the Proton acceptor in catalysis. Residues Phe67, Asn69, and Asn115 each coordinate tRNA.

This sequence belongs to the PTH family. As to quaternary structure, monomer.

Its subcellular location is the cytoplasm. The enzyme catalyses an N-acyl-L-alpha-aminoacyl-tRNA + H2O = an N-acyl-L-amino acid + a tRNA + H(+). Functionally, hydrolyzes ribosome-free peptidyl-tRNAs (with 1 or more amino acids incorporated), which drop off the ribosome during protein synthesis, or as a result of ribosome stalling. In terms of biological role, catalyzes the release of premature peptidyl moieties from peptidyl-tRNA molecules trapped in stalled 50S ribosomal subunits, and thus maintains levels of free tRNAs and 50S ribosomes. The protein is Peptidyl-tRNA hydrolase of Leptospira interrogans serogroup Icterohaemorrhagiae serovar Lai (strain 56601).